Reading from the N-terminus, the 470-residue chain is 6-phosphofructo-2-kinase/fructose-2,6-bisphosphatase (470 aa).

Residues 1-249 (MAAVASGQLT…VYYLMNTHVT (249 aa)) form a 6-phosphofructo-2-kinase region. A Phosphoserine; by PKA modification is found at Ser31. 47 to 55 (GLRRPGKTY) contacts ATP. Residues Arg80 and Arg104 each coordinate beta-D-fructose 6-phosphate. Asp130 is an active-site residue. Thr132 and Arg138 together coordinate beta-D-fructose 6-phosphate. Residue Cys160 is part of the active site. 169-174 (NIKQVK) serves as a coordination point for ATP. Beta-D-fructose 6-phosphate contacts are provided by Lys174, Arg195, and Tyr199. The fructose-2,6-bisphosphatase stretch occupies residues 250 to 469 (PRAIYLSRHG…AEALVTVPEH (220 aa)). Beta-D-fructose 2,6-bisphosphate is bound at residue Arg257. His258 acts as the Tele-phosphohistidine intermediate in catalysis. Positions 264 and 270 each coordinate beta-D-fructose 2,6-bisphosphate. The Proton donor/acceptor role is filled by Glu327. The beta-D-fructose 2,6-bisphosphate site is built by Tyr338, Arg352, Lys356, Tyr367, Gln393, and Arg397. 349 to 352 (FALR) contributes to the ATP binding site. ATP is bound by residues 393–397 (QAVMR) and Tyr429.

It in the C-terminal section; belongs to the phosphoglycerate mutase family. In terms of assembly, homodimer. In terms of tissue distribution, liver.

The enzyme catalyses beta-D-fructose 2,6-bisphosphate + H2O = beta-D-fructose 6-phosphate + phosphate. It catalyses the reaction beta-D-fructose 6-phosphate + ATP = beta-D-fructose 2,6-bisphosphate + ADP + H(+). Phosphorylation results in inhibition of the kinase activity. In terms of biological role, synthesis and degradation of fructose 2,6-bisphosphate. The chain is 6-phosphofructo-2-kinase/fructose-2,6-bisphosphatase from Gallus gallus (Chicken).